Reading from the N-terminus, the 123-residue chain is 1,4-dihydroxy-2-naphthoyl-CoA hydrolase (123 aa).

Catalysis depends on E46, which acts as the Nucleophile or proton acceptor.

It belongs to the thioesterase PaaI family.

The enzyme catalyses 1,4-dihydroxy-2-naphthoyl-CoA + H2O = 1,4-dihydroxy-2-naphthoate + CoA + H(+). Its pathway is quinol/quinone metabolism; menaquinone biosynthesis. Its function is as follows. Catalyzes the hydrolysis of 1,4-dihydroxy-2-naphthoyl-CoA (DHNA-CoA) to 1,4-dihydroxy-2-naphthoate (DHNA) and free coenzyme A. Production of DHNA is required for protection against bacteriolysis in the cytosol of macrophages and tissue-specific virulence in vivo, suggesting that MenI is required to protect the bacteria from killing in the macrophage cytosol. This is 1,4-dihydroxy-2-naphthoyl-CoA hydrolase from Listeria monocytogenes serotype 1/2a (strain 10403S).